A 222-amino-acid chain; its full sequence is N-(5'-phosphoribosyl)anthranilate isomerase (222 aa).

It belongs to the TrpF family.

The enzyme catalyses N-(5-phospho-beta-D-ribosyl)anthranilate = 1-(2-carboxyphenylamino)-1-deoxy-D-ribulose 5-phosphate. It participates in amino-acid biosynthesis; L-tryptophan biosynthesis; L-tryptophan from chorismate: step 3/5. The chain is N-(5'-phosphoribosyl)anthranilate isomerase from Brevibacillus brevis (strain 47 / JCM 6285 / NBRC 100599).